The following is a 195-amino-acid chain: MKASLITAFVLPLLALASPYLPTDPPANIEVTARHPGRENVDKLPMQAAGRAFWLGGSPATYCPEIVGDNCPPGNATVILGLNSMSVLVPGGQQMYVEPSGKLGFTQAHSAAIPPGSYVGGFAYKPLNKKSGSFYFGGWGATALMACPVPDSKYYQVFANIKNAMVPGGDVKKCVEFVGVAKEYKGTTPAAWQYT.

The signal sequence occupies residues 1-17; it reads MKASLITAFVLPLLALA. The N-linked (GlcNAc...) asparagine glycan is linked to Asn-75.

Its subcellular location is the secreted. This is an uncharacterized protein from Arthroderma benhamiae (strain ATCC MYA-4681 / CBS 112371) (Trichophyton mentagrophytes).